We begin with the raw amino-acid sequence, 134 residues long: ATP synthase epsilon chain, chloroplastic (134 aa).

This sequence belongs to the ATPase epsilon chain family. F-type ATPases have 2 components, CF(1) - the catalytic core - and CF(0) - the membrane proton channel. CF(1) has five subunits: alpha(3), beta(3), gamma(1), delta(1), epsilon(1). CF(0) has three main subunits: a, b and c.

The protein localises to the plastid. The protein resides in the chloroplast thylakoid membrane. In terms of biological role, produces ATP from ADP in the presence of a proton gradient across the membrane. This chain is ATP synthase epsilon chain, chloroplastic, found in Pelargonium hortorum (Common geranium).